A 238-amino-acid polypeptide reads, in one-letter code: Riboflavin synthase (238 aa).

2 Lumazine-binding repeats span residues 1–103 (MFTG…FGGH) and 104–205 (YVQG…EKQI). Residues 4–6 (GIV), 54–56 (CLT), and 68–73 (GISPET) contribute to the 2,4-dihydroxypteridine site. S95 is subject to Phosphoserine. 2,4-dihydroxypteridine is bound by residues 107-109 (GHV), K143, 152-154 (SLT), and 170-175 (SMIKHT).

Homotrimer.

It catalyses the reaction 2 6,7-dimethyl-8-(1-D-ribityl)lumazine + H(+) = 5-amino-6-(D-ribitylamino)uracil + riboflavin. It participates in cofactor biosynthesis; riboflavin biosynthesis; riboflavin from 2-hydroxy-3-oxobutyl phosphate and 5-amino-6-(D-ribitylamino)uracil: step 2/2. Catalyzes the dismutation of two molecules of 6,7-dimethyl-8-ribityllumazine, resulting in the formation of riboflavin and 5-amino-6-(D-ribitylamino)uracil. The polypeptide is Riboflavin synthase (Saccharomyces cerevisiae (strain ATCC 204508 / S288c) (Baker's yeast)).